We begin with the raw amino-acid sequence, 189 residues long: Photosystem I assembly protein Ycf4 (189 aa).

Transmembrane regions (helical) follow at residues 25 to 45 (SVYF…LAGL) and 62 to 82 (LVFI…SLAG).

This sequence belongs to the Ycf4 family.

It is found in the cellular thylakoid membrane. In terms of biological role, seems to be required for the assembly of the photosystem I complex. The sequence is that of Photosystem I assembly protein Ycf4 from Synechococcus sp. (strain JA-2-3B'a(2-13)) (Cyanobacteria bacterium Yellowstone B-Prime).